The primary structure comprises 165 residues: Pyruvoyl-dependent arginine decarboxylase 1 (165 aa).

Ser45 carries the post-translational modification Pyruvic acid (Ser).

It belongs to the PdaD family. Pyruvate is required as a cofactor.

It catalyses the reaction L-arginine + H(+) = agmatine + CO2. In Methanosarcina mazei (strain ATCC BAA-159 / DSM 3647 / Goe1 / Go1 / JCM 11833 / OCM 88) (Methanosarcina frisia), this protein is Pyruvoyl-dependent arginine decarboxylase 1 (pdaD1).